A 285-amino-acid chain; its full sequence is ATP phosphoribosyltransferase (285 aa).

Belongs to the ATP phosphoribosyltransferase family. Long subfamily. Mg(2+) serves as cofactor.

Its subcellular location is the cytoplasm. It catalyses the reaction 1-(5-phospho-beta-D-ribosyl)-ATP + diphosphate = 5-phospho-alpha-D-ribose 1-diphosphate + ATP. Its pathway is amino-acid biosynthesis; L-histidine biosynthesis; L-histidine from 5-phospho-alpha-D-ribose 1-diphosphate: step 1/9. With respect to regulation, feedback inhibited by histidine. Catalyzes the condensation of ATP and 5-phosphoribose 1-diphosphate to form N'-(5'-phosphoribosyl)-ATP (PR-ATP). Has a crucial role in the pathway because the rate of histidine biosynthesis seems to be controlled primarily by regulation of HisG enzymatic activity. The chain is ATP phosphoribosyltransferase from Methanocella arvoryzae (strain DSM 22066 / NBRC 105507 / MRE50).